We begin with the raw amino-acid sequence, 814 residues long: MVKQTIQIFARVKPPVRKHQQGIYSIDEDEKLIPSLEIILPRDLADGFVNNKRESYKFKFQRIFDQDANQETVFENIAKPVAGSVLAGYNGTIFAYGQTGSGKTFTITGGAERYSDRGIIPRTLSYIFEQLQKDSSKIYTTHISYLEIYNECGYDLLDPRHEASSLEDLPKVTILEDPDQNIHLKNLTLHQATTEEEALNLLFLGDTNRMIAETPMNQASTRSHCIFTIHLSSKEPGSATVRHAKLHLVDLAGSERVAKTGVGGHLLTEAKYINLSLHYLEQVIIALSEKHRSHIPYRNSMMTSVLRDSLGGNCMTTMIATLSLEKRNLDESISTCRFAQRVALIKNEAVLNEEINPRLVIKRLQKEIQELKDELAMVTGEQRTEALTEAELLQLEKLITSFLEDQDSDSRLEVGADMRKVHHCFHHLKKLLNDKKILENNTVSSESKDQDCQEPLKEEEYRKLRDILKQRDNEINILVNMLKKEKKKAQEALHLAGMDRREFRQSQSPPFRLGNPEEGQRMRLSSAPSQAQDFSILGKRSSLLHKKIGMREEMSLGCQEAFEIFKRDHADSVTIDDNKQILKQRFSEAKALGESINEARSKIGHLKEEITQRHIQQVALGISENMAVPLMPDQQEEKLRSQLEEEKRRYKTMFTRLKALKVEIEHLQLLMDKAKVKLQKEFEVWWAEEATNLQVNSPAVNSLDHTKPFLQTSDSQHEWSQLLSNKSSGGWEVQDQGTGRFDVCDVNARKILPSPCPSPHSQKQSSTSTPLEDSIPKRPVSSIPLTGDSQTDSDIIAFIKARQSILQKQCLGSN.

One can recognise a Kinesin motor domain in the interval 5–345 (TIQIFARVKP…CRFAQRVALI (341 aa)). An ATP-binding site is contributed by 97–104 (GQTGSGKT). Coiled coils occupy residues 356 to 385 (NPRL…QRTE), 456 to 494 (LKEE…EALH), and 588 to 683 (EAKA…KEFE). Residues 752 to 788 (LPSPCPSPHSQKQSSTSTPLEDSIPKRPVSSIPLTGD) form a disordered region. The segment covering 759 to 771 (PHSQKQSSTSTPL) has biased composition (polar residues).

It belongs to the TRAFAC class myosin-kinesin ATPase superfamily. Kinesin family.

The protein resides in the cytoplasm. The protein localises to the cytoskeleton. The chain is Kinesin-like protein KIF6 (KIF6) from Homo sapiens (Human).